The sequence spans 722 residues: Bifunctional UDP-N-acetylglucosamine 2-epimerase/N-acetylmannosamine kinase (722 aa).

UDP-binding residues include Arg-19, Ser-23, Arg-113, His-220, and Asn-253. Residues Lys-259, Glu-271, Lys-280, and His-281 each coordinate CMP-N-acetyl-beta-neuraminate. Positions 282, 301, 302, 307, and 321 each coordinate UDP. Residues 406–722 (TLSALAVDLG…VLDYTTRRIH (317 aa)) form an N-acetylmannosamine kinase region. Asp-413 is a Mg(2+) binding site. Gly-416 contributes to the an N-acyl-D-mannosamine 6-phosphate binding site. The ADP site is built by Thr-417, Asn-418, and Arg-420. An N-acyl-D-mannosamine 6-phosphate contacts are provided by Gly-476, Arg-477, Thr-489, Asn-516, Asp-517, and Gly-545. The an N-acyl-D-mannosamine site is built by Gly-476, Arg-477, Thr-489, Asn-516, and Asp-517. Residue Asp-517 is part of the active site. The an N-acyl-D-mannosamine site is built by Glu-566 and His-569. His-569 is a binding site for an N-acyl-D-mannosamine 6-phosphate. Positions 569, 579, 581, and 586 each coordinate Zn(2+). Glu-588 is an an N-acyl-D-mannosamine 6-phosphate binding site. An N-acyl-D-mannosamine is bound at residue Glu-588.

In the N-terminal section; belongs to the UDP-N-acetylglucosamine 2-epimerase family. This sequence in the C-terminal section; belongs to the ROK (NagC/XylR) family. In terms of assembly, homodimer. Homotetramer. Homohexamer. The hexameric form exhibits both enzyme activities, whereas the dimeric form only catalyzes the phosphorylation of N-acyl-D-mannosamine. Phosphorylated. Phosphorylation by PKC activates the UDP-N-acetylglucosamine 2-epimerase activity. As to expression, widely expressed. Highest expression is observed in liver.

It localises to the cytoplasm. Its subcellular location is the cytosol. The enzyme catalyses UDP-N-acetyl-alpha-D-glucosamine + H2O = aldehydo-N-acetyl-D-mannosamine + UDP + H(+). It carries out the reaction an N-acyl-D-mannosamine + ATP = an N-acyl-D-mannosamine 6-phosphate + ADP + H(+). Its pathway is amino-sugar metabolism; N-acetylneuraminate biosynthesis. With respect to regulation, the UDP-N-acetylglucosamine 2-epimerase activity, in contrast to the N-acetylmannosamine kinase activity, exhibits allosteric regulation by cytidine monophosphate-N-acetylneuraminic acid (CMP-Neu5Ac), the end product of neuraminic acid biosynthesis. Moreover, the activity is contingent upon the oligomeric state of the enzyme. The monomeric form is inactive, while the dimeric form selectively catalyzes the phosphorylation of N-acetylmannosamine. The hexameric form, on the other hand, demonstrates full proficiency in both enzyme activities. Furthermore, the UDP-N-acetylglucosamine 2-epimerase activity is increased by PKC-mediated phosphorylation. In terms of biological role, bifunctional enzyme that possesses both UDP-N-acetylglucosamine 2-epimerase and N-acetylmannosamine kinase activities, and serves as the initiator of the biosynthetic pathway leading to the production of N-acetylneuraminic acid (NeuAc), a critical precursor in the synthesis of sialic acids. By catalyzing this pivotal and rate-limiting step in sialic acid biosynthesis, this enzyme assumes a pivotal role in governing the regulation of cell surface sialylation. Sialic acids represent a category of negatively charged sugars that reside on the surface of cells as terminal components of glycoconjugates and mediate important functions in various cellular processes, including cell adhesion, signal transduction, and cellular recognition. This is Bifunctional UDP-N-acetylglucosamine 2-epimerase/N-acetylmannosamine kinase from Rattus norvegicus (Rat).